The primary structure comprises 340 residues: Methane monooxygenase component C (340 aa).

Positions 1–92 (MYQIVIETED…DLHLLVPYTY (92 aa)) constitute a 2Fe-2S ferredoxin-type domain. The [2Fe-2S] cluster site is built by Cys37, Cys41, Cys44, and Cys76. One can recognise an FAD-binding FR-type domain in the interval 101 to 205 (QTNWLAEILA…RGPAGSFFLH (105 aa)). Residue 215–229 (VAGGTGLSPVLSMIR) coordinates FAD.

The soluble methane monooxygenase (sMMO) consists of four components A/MMOH (composed of alpha/MmoX, beta/MmoY and gamma/MmoZ), B/MMOB (MmoB), C/MMOR (MmoC) and D/MMOD (MmoD). [2Fe-2S] cluster is required as a cofactor.

The catalysed reaction is methane + NADH + O2 + H(+) = methanol + NAD(+) + H2O. It carries out the reaction methane + NADPH + O2 + H(+) = methanol + NADP(+) + H2O. Its function is as follows. Responsible for the initial oxygenation of methane to methanol in methanotrophs. It also catalyzes the monohydroxylation of a variety of unactivated alkenes, alicyclic, aromatic and heterocyclic compounds. The component C is the iron-sulfur flavoprotein of sMMO. The chain is Methane monooxygenase component C (mmoC) from Methylosinus trichosporium.